We begin with the raw amino-acid sequence, 52 residues long: Large ribosomal subunit protein eL39 (52 aa).

Belongs to the eukaryotic ribosomal protein eL39 family.

This chain is Large ribosomal subunit protein eL39 (RPL39), found in Tetrahymena thermophila (strain SB210).